The sequence spans 1091 residues: LRR receptor-like serine/threonine-protein kinase RGI3 (1091 aa).

The N-terminal stretch at 1–24 (MPPNIYRLSFFSSLLCFFFIPCFS) is a signal peptide. The Extracellular portion of the chain corresponds to 25–703 (LDQQGQALLS…TTRNSSVVRL (679 aa)). An LRR 1 repeat occupies 33–56 (LSWKSQLNISGDAFSSWHVADTSP). N40 carries an N-linked (GlcNAc...) asparagine glycan. An intrachain disulfide couples C57 to C64. LRR repeat units follow at residues 67–91 (RGEV…SLRS), 92–115 (LKSL…EIGD), 116–140 (FTEL…IFRL), 142–166 (KLKT…NLSG), 168–188 (VELM…IGEL), 190–213 (NLQV…IGNC), 214–237 (ENLV…IGNL), 239–261 (RVQT…IGYC), 262–285 (TELQ…IGGL), 287–309 (KLQS…LGNC), 311–332 (ELWL…SFGK), 333–357 (LENL…LTNC), 359–383 (KLTH…NLRS), 385–405 (TMFF…LSQC), 406–429 (RELQ…IFGL), 431–453 (NLTK…IGNC), 454–477 (TNLY…IGNL), 478–501 (KNLN…ISGC), 503–524 (SLEF…TTLP), 525–548 (KSLK…IGLL), 549–572 (TELT…ISTC), 574–596 (SLQL…LGQI), 598–620 (SLAI…RFSD), 621–644 (LKNL…LTDL), 645–668 (QNLV…PFFR), and 669–690 (RLPL…ISTR). N-linked (GlcNAc...) asparagine glycosylation is present at N104. The N-linked (GlcNAc...) asparagine glycan is linked to N163. 5 consecutive short sequence motifs (small peptide recognition) follow at residues 173–174 (FD), 195–198 (RAGG), 218–223 (MLGLAE), Y246, and 268–270 (YLY). Short sequence motifs (small peptide recognition) lie at residues 316–319 (DFSE) and 338–340 (ELQ). N356 is a glycosylation site (N-linked (GlcNAc...) asparagine). Short sequence motifs (small peptide recognition) lie at residues 386–390 (MFFAW) and 412–415 (DLSY). N-linked (GlcNAc...) asparagine glycosylation is present at N431. Positions 434–438 (KLLLL) match the Small peptide recognition motif. The N-linked (GlcNAc...) asparagine glycan is linked to N452. The Small peptide recognition motif lies at 458 to 460 (RLR). N604 carries N-linked (GlcNAc...) asparagine glycosylation. N651 is a glycosylation site (N-linked (GlcNAc...) asparagine). An N-linked (GlcNAc...) asparagine glycan is attached at N697. Residues 704 to 724 (TILILVVVTAVLVLMAVYTLV) traverse the membrane as a helical segment. The Cytoplasmic portion of the chain corresponds to 725–1091 (RARAAGKQLL…CSFAFSDDSV (367 aa)). One can recognise a Protein kinase domain in the interval 760–1046 (LTSANVIGTG…MLTEIRHIDV (287 aa)). ATP is bound by residues 766 to 774 (IGTGSSGVV) and K788. Y831 and Y870 each carry phosphotyrosine. Residue D883 is the Proton acceptor of the active site. At Y933 the chain carries Phosphotyrosine.

It belongs to the protein kinase superfamily. Ser/Thr protein kinase family. Binds to RGF peptides such as RGF1, GLV5/CLEL1/RGF2, GLV7/CLEL3/RGF3, GLV3/RGF4, GLV10/CLEL7/RGF5 and RGF10/CLELN; these interactions trigger the formation of heterodimers with SERK1, SERK2 or BAK1/SERK3 via LRR regions. In terms of processing, phosphorylated and ubiquitinated upon interaction with RGF1, thus leading to activation a subsequent degradation. Post-translationally, autophosphorylated. Expressed in roots.

The protein resides in the cell membrane. It catalyses the reaction L-seryl-[protein] + ATP = O-phospho-L-seryl-[protein] + ADP + H(+). The enzyme catalyses L-threonyl-[protein] + ATP = O-phospho-L-threonyl-[protein] + ADP + H(+). Together with RGI1, RGI2, RGI4 and RGI5, acts as a receptor of RGF peptides (e.g. RGF1, GLV5/CLEL1/RGF2, GLV7/CLEL3/RGF3, GLV3/RGF4, GLV10/CLEL7/RGF5 and RGF10/CLELN), peptide hormones which maintain the postembryonic root stem cell niche by regulating the expression levels and patterns of the transcription factor PLETHORA (PLT, e.g. PLT1 and PLT2). Links RGF peptides signal with their downstream components. In Arabidopsis thaliana (Mouse-ear cress), this protein is LRR receptor-like serine/threonine-protein kinase RGI3.